Reading from the N-terminus, the 508-residue chain is Probable cytosol aminopeptidase (508 aa).

Residues lysine 274 and aspartate 279 each contribute to the Mn(2+) site. Lysine 286 is a catalytic residue. Residues aspartate 297, aspartate 356, and glutamate 358 each coordinate Mn(2+). Residue arginine 360 is part of the active site.

The protein belongs to the peptidase M17 family. Requires Mn(2+) as cofactor.

Its subcellular location is the cytoplasm. It carries out the reaction Release of an N-terminal amino acid, Xaa-|-Yaa-, in which Xaa is preferably Leu, but may be other amino acids including Pro although not Arg or Lys, and Yaa may be Pro. Amino acid amides and methyl esters are also readily hydrolyzed, but rates on arylamides are exceedingly low.. The catalysed reaction is Release of an N-terminal amino acid, preferentially leucine, but not glutamic or aspartic acids.. Functionally, presumably involved in the processing and regular turnover of intracellular proteins. Catalyzes the removal of unsubstituted N-terminal amino acids from various peptides. The chain is Probable cytosol aminopeptidase from Cutibacterium acnes (strain DSM 16379 / KPA171202) (Propionibacterium acnes).